The chain runs to 361 residues: MKKHAIGIAALNALSIDDDGWCQLLPAGHFSARDGRPFDVTGGQGWFIDGEIAGRLVEGVRALNQDVLIDYEHNQLRKDKGLPPEQLVAAGWFNADEMQWREGEGLFIHPRWTAAAQQRIDDGEFGYLSAVFPYDTATGAVLQIRLAALTNDPGATGMKKLTALAADLPDILQQENKPMNETLRKLLARLGVTVPENADITDEQATAALTALDTLEINAGKVAALSAELEKAQKAAVDLTKYVPVESYNALRDELAQATAQSATASLSAVLDKAEQEGRIFKSERTYLEQLGGQIGVAALSAQLEKKQPIAALSAMQTTTAKIPSQEKTAVAVLSADEQAAVKALGITEAEYLKMKQEQEK.

Belongs to the peptidase U35 family. In terms of assembly, might interact with viral portal protein; this interaction gives rise to an early 25S initiator complex. The scaffolding protein Z and the capsid protein T should then be added to the initiator complex to yield immature prohead. Host GroEL and GroES are also essential for the correct assembly of viral head. In terms of processing, the N-terminus is acetylated.

It localises to the host cytoplasm. Its function is as follows. Protease I is involved in virion assembly and maturation. Protease I cleaves the portal protein to yield mature procapsids competent for DNA packaging. Isoform scaffold protein Z probably helps the capsid proteins to assemble into a functional capsid. This chain is Protease I (I), found in Escherichia phage Mu (Bacteriophage Mu).